The following is a 426-amino-acid chain: Delta-aminolevulinic acid dehydratase, chloroplastic (426 aa).

The transit peptide at Met-1–Arg-45 directs the protein to the chloroplast. The disordered stretch occupies residues Gly-74–Arg-107. Lys-293 (schiff-base intermediate with substrate) is an active-site residue. The 5-aminolevulinate site is built by Arg-303 and Lys-315. Glu-331 contributes to the Mg(2+) binding site. The active-site Schiff-base intermediate with substrate is Lys-346. 2 residues coordinate 5-aminolevulinate: Ser-372 and Tyr-411.

Belongs to the ALAD family. In terms of assembly, homooctamer. Mg(2+) is required as a cofactor.

The protein localises to the plastid. Its subcellular location is the chloroplast. It catalyses the reaction 2 5-aminolevulinate = porphobilinogen + 2 H2O + H(+). The protein operates within porphyrin-containing compound metabolism; protoporphyrin-IX biosynthesis; coproporphyrinogen-III from 5-aminolevulinate: step 1/4. Functionally, catalyzes an early step in the biosynthesis of tetrapyrroles. Binds two molecules of 5-aminolevulinate per subunit, each at a distinct site, and catalyzes their condensation to form porphobilinogen. The protein is Delta-aminolevulinic acid dehydratase, chloroplastic (HEMB) of Oryza sativa subsp. japonica (Rice).